We begin with the raw amino-acid sequence, 363 residues long: HAUS augmin-like complex subunit 4 (363 aa).

Belongs to the HAUS4 family. In terms of assembly, component of the HAUS augmin-like complex. The complex interacts with the gamma-tubulin ring complex and this interaction is required for spindle assembly. Interacts with EML3 (phosphorylated at 'Thr-881').

The protein resides in the cytoplasm. The protein localises to the cytoskeleton. It localises to the microtubule organizing center. Its subcellular location is the centrosome. It is found in the spindle. Contributes to mitotic spindle assembly, maintenance of centrosome integrity and completion of cytokinesis as part of the HAUS augmin-like complex. This is HAUS augmin-like complex subunit 4 (HAUS4) from Homo sapiens (Human).